The chain runs to 402 residues: Propionate kinase (402 aa).

ATP is bound by residues Asn11 and Lys18. Position 11 (Asn11) interacts with Mg(2+). Arg86 lines the substrate pocket. Asp143 functions as the Proton donor/acceptor in the catalytic mechanism. ATP is bound by residues His175, 203–207 (HLGNG), 278–280 (DLR), and 326–330 (GIGEN).

It belongs to the acetokinase family. TdcD subfamily. In terms of assembly, homodimer. The cofactor is Mg(2+).

It catalyses the reaction propanoate + ATP = propanoyl phosphate + ADP. It functions in the pathway amino-acid degradation; L-threonine degradation via propanoate pathway; propanoate from L-threonine: step 4/4. In terms of biological role, catalyzes the conversion of propionyl phosphate and ADP to propionate and ATP. The polypeptide is Propionate kinase (Escherichia coli O6:H1 (strain CFT073 / ATCC 700928 / UPEC)).